Here is a 171-residue protein sequence, read N- to C-terminus: Profilin (171 aa).

The pro-rich sequence-binding stretch occupies residues Y5 to Y10. Positions F48–F54 match the Plasmodium-specific profilin mini-domain motif. 2 actin-binding regions span residues K100–F112 and R152–K156.

Belongs to the profilin family. In terms of assembly, binds actin.

It localises to the cytoplasm. Its subcellular location is the cytoskeleton. Essential for the invasive blood stages of the parasite. Binds to proline rich sequences in various regulatory formin-like proteins and also to membrane phospholipids. Binds to actin and affects the structure of the cytoskeleton. Weakly sequesters actin monomers. This Plasmodium falciparum (isolate 3D7) protein is Profilin.